Reading from the N-terminus, the 665-residue chain is Auxin response factor 1 (665 aa).

A DNA-binding region (TF-B3) is located at residues phenylalanine 124 to methionine 226. 3 disordered regions span residues valine 356–leucine 408, proline 496–arginine 542, and lysine 645–arginine 665. 3 stretches are compositionally biased toward polar residues: residues valine 497–proline 519, leucine 530–arginine 542, and asparagine 651–arginine 665. Residues arginine 542 to lysine 635 form the PB1 domain.

Belongs to the ARF family. In terms of assembly, homodimers and heterodimers. Interacts with the auxin-responsive proteins IAA12, IAA13, IAA17 and with ARF2. Binds to RIN13 in the nucleus. Expressed in the whole plant.

The protein localises to the nucleus. The protein resides in the cytoplasm. Its function is as follows. Auxin response factors (ARFs) are transcriptional factors that bind specifically to the DNA sequence 5'-TGTCTC-3' found in the auxin-responsive promoter elements (AuxREs). Seems to act as transcriptional repressor. Formation of heterodimers with Aux/IAA proteins may alter their ability to modulate early auxin response genes expression. Promotes flowering, stamen development, floral organ abscission and fruit dehiscence. Acts as a repressor of IAA2, IAA3 and IAA7. Together with RIN13, promotes leaf senescence and cell death. This is Auxin response factor 1 from Arabidopsis thaliana (Mouse-ear cress).